Consider the following 212-residue polypeptide: Ribonuclease HII (212 aa).

In terms of domain architecture, RNase H type-2 spans 12–201 (ELVAGVDEVG…VRAMLEQVSI (190 aa)). Residues aspartate 18, glutamate 19, and aspartate 110 each contribute to the a divalent metal cation site.

Belongs to the RNase HII family. It depends on Mn(2+) as a cofactor. The cofactor is Mg(2+).

It is found in the cytoplasm. The catalysed reaction is Endonucleolytic cleavage to 5'-phosphomonoester.. Functionally, endonuclease that specifically degrades the RNA of RNA-DNA hybrids. The polypeptide is Ribonuclease HII (Stutzerimonas stutzeri (strain A1501) (Pseudomonas stutzeri)).